The following is a 789-amino-acid chain: Probable Xaa-Pro aminopeptidase SNOG_02267 (789 aa).

The Mn(2+) site is built by aspartate 240, aspartate 251, glutamate 375, and glutamate 416. Disordered stretches follow at residues 607-658 and 670-704; these read SMSK…TGLA and NHVSESPTPSQRRAGGCTPHWRGQNRADQSGDDAL. Residues 622–637 are compositionally biased toward polar residues; the sequence is VISQKQIRNRRSVSST. The segment covering 638 to 650 has biased composition (basic and acidic residues); that stretch reads ARHDLRGDRERPQ.

This sequence belongs to the peptidase M24B family. Mn(2+) is required as a cofactor.

It catalyses the reaction Release of any N-terminal amino acid, including proline, that is linked to proline, even from a dipeptide or tripeptide.. In terms of biological role, catalyzes the removal of a penultimate prolyl residue from the N-termini of peptides. The sequence is that of Probable Xaa-Pro aminopeptidase SNOG_02267 from Phaeosphaeria nodorum (strain SN15 / ATCC MYA-4574 / FGSC 10173) (Glume blotch fungus).